The primary structure comprises 351 residues: Very-long-chain 3-oxoacyl-CoA reductase (351 aa).

A helical membrane pass occupies residues 26-46; the sequence is LLWCAFTVGAVKLTTFMLSLI. 7 residues coordinate NADP(+): L72, D126, N153, Y225, K229, V258, and S260. The active-site Proton donor is Y225. The active-site Lowers pKa of active site Tyr is the K229.

The protein belongs to the short-chain dehydrogenases/reductases (SDR) family.

The protein localises to the endoplasmic reticulum membrane. The catalysed reaction is a very-long-chain (3R)-3-hydroxyacyl-CoA + NADP(+) = a very-long-chain 3-oxoacyl-CoA + NADPH + H(+). It functions in the pathway lipid metabolism; fatty acid biosynthesis. Its function is as follows. Component of the microsomal membrane bound fatty acid elongation system, which produces the 26-carbon very long-chain fatty acids (VLCFA) from palmitate. Catalyzes the reduction of the 3-ketoacyl-CoA intermediate that is formed in each cycle of fatty acid elongation. VLCFAs serve as precursors for ceramide and sphingolipids. This Eremothecium gossypii (strain ATCC 10895 / CBS 109.51 / FGSC 9923 / NRRL Y-1056) (Yeast) protein is Very-long-chain 3-oxoacyl-CoA reductase.